Here is a 292-residue protein sequence, read N- to C-terminus: ATP synthase gamma chain (292 aa).

Belongs to the ATPase gamma chain family. As to quaternary structure, F-type ATPases have 2 components, CF(1) - the catalytic core - and CF(0) - the membrane proton channel. CF(1) has five subunits: alpha(3), beta(3), gamma(1), delta(1), epsilon(1). CF(0) has three main subunits: a, b and c.

The protein resides in the cell inner membrane. Produces ATP from ADP in the presence of a proton gradient across the membrane. The gamma chain is believed to be important in regulating ATPase activity and the flow of protons through the CF(0) complex. In Brucella anthropi (strain ATCC 49188 / DSM 6882 / CCUG 24695 / JCM 21032 / LMG 3331 / NBRC 15819 / NCTC 12168 / Alc 37) (Ochrobactrum anthropi), this protein is ATP synthase gamma chain.